The chain runs to 526 residues: 3-hydroxy-3-methylglutaryl-coenzyme A reductase 2 (526 aa).

Residues Glu-193, Lys-325, and Asp-401 each act as charge relay system in the active site. His-499 functions as the Proton donor in the catalytic mechanism. The tract at residues 503–526 (NRKTEAPAPQADTISMTHNLPHSD) is disordered. A compositionally biased stretch (polar residues) spans 514 to 526 (DTISMTHNLPHSD).

This sequence belongs to the HMG-CoA reductase family.

The catalysed reaction is (R)-mevalonate + 2 NADP(+) + CoA = (3S)-3-hydroxy-3-methylglutaryl-CoA + 2 NADPH + 2 H(+). It functions in the pathway metabolic intermediate biosynthesis; (R)-mevalonate biosynthesis; (R)-mevalonate from acetyl-CoA: step 3/3. This transmembrane glycoprotein is involved in the control of cholesterol biosynthesis. It is the rate-limiting enzyme of the sterol biosynthesis. The chain is 3-hydroxy-3-methylglutaryl-coenzyme A reductase 2 (hmgB) from Dictyostelium discoideum (Social amoeba).